A 156-amino-acid chain; its full sequence is Small ribosomal subunit protein uS7 (156 aa).

It belongs to the universal ribosomal protein uS7 family. In terms of assembly, part of the 30S ribosomal subunit. Contacts proteins S9 and S11.

One of the primary rRNA binding proteins, it binds directly to 16S rRNA where it nucleates assembly of the head domain of the 30S subunit. Is located at the subunit interface close to the decoding center, probably blocks exit of the E-site tRNA. The chain is Small ribosomal subunit protein uS7 from Tropheryma whipplei (strain TW08/27) (Whipple's bacillus).